The chain runs to 265 residues: Diphthine synthase (265 aa).

Residues Leu-10, Asp-87, Val-90, 115–116 (SI), Leu-166, Ala-209, and His-234 each bind S-adenosyl-L-methionine.

This sequence belongs to the diphthine synthase family. Homodimer.

It carries out the reaction 2-[(3S)-amino-3-carboxypropyl]-L-histidyl-[translation elongation factor 2] + 3 S-adenosyl-L-methionine = diphthine-[translation elongation factor 2] + 3 S-adenosyl-L-homocysteine + 3 H(+). It participates in protein modification; peptidyl-diphthamide biosynthesis. Functionally, S-adenosyl-L-methionine-dependent methyltransferase that catalyzes the trimethylation of the amino group of the modified target histidine residue in translation elongation factor 2 (EF-2), to form an intermediate called diphthine. The three successive methylation reactions represent the second step of diphthamide biosynthesis. This chain is Diphthine synthase, found in Pyrococcus horikoshii (strain ATCC 700860 / DSM 12428 / JCM 9974 / NBRC 100139 / OT-3).